A 1048-amino-acid polypeptide reads, in one-letter code: Putative truncated guanine nucleotide exchange factor SDC25 (1048 aa).

2 disordered regions span residues 208-242 (SKQG…VSGS) and 419-444 (LNLD…DEYE). Positions 212–224 (TSCSSETSHHSPS) are enriched in low complexity. The region spanning 578–710 (SNNRIKGGSK…LLKEVNQKFK (133 aa)) is the N-terminal Ras-GEF domain. The 248-residue stretch at 748-995 (DPVLFATQLT…YQLSLIIEPK (248 aa)) folds into the Ras-GEF domain. The disordered stretch occupies residues 997–1048 (RKKVVPNSNSNNKSQEKSRDDQTDEGKTSTKKDRFPKFQLHKTKKKAPKVSK). The span at 1010–1032 (SQEKSRDDQTDEGKTSTKKDRFP) shows a compositional bias: basic and acidic residues. The segment covering 1035-1048 (QLHKTKKKAPKVSK) has biased composition (basic residues).

In terms of biological role, promotes the exchange of Ras-bound GDP by GTP. This is Putative truncated guanine nucleotide exchange factor SDC25 (SDC25) from Saccharomyces cerevisiae (strain ATCC 204508 / S288c) (Baker's yeast).